Reading from the N-terminus, the 169-residue chain is Allophycocyanin subunit beta-18 (169 aa).

Asn72 is subject to N4-methylasparagine. A (2R,3E)-phycocyanobilin-binding site is contributed by Cys82.

This sequence belongs to the phycobiliprotein family. As to quaternary structure, heterodimer of an alpha and a beta chain. Post-translationally, contains one covalently linked phycocyanobilin chromophore.

It is found in the plastid. The protein localises to the cyanelle thylakoid membrane. Functionally, light-harvesting photosynthetic bile pigment-protein from the phycobiliprotein complex. Allophycocyanin has a maximum absorption at approximately 650 nanometers. This is Allophycocyanin subunit beta-18 (apcF) from Cyanophora paradoxa.